The primary structure comprises 720 residues: MTAPKSTAPASTAATFRAIPVDDLSPAEAASEHKALAQEITGHDAAYYREDAPVVSDAEYDALRHRYEAIEERFPGLRGEDSLSEKVGAAPSEKFGKVAHKVPMLSLANCFSDEEVVEFVARVKRFLNLGPDDEVAFTCEPKIDGLSCSLHYENGRLTVAATRGDGSQGEDVTQNVRTIADIPERLAGKGVPQTIDVRGEVYMAKADFEALNARQAAAEEKVFANPRNAAAGSLRQLDSSITASRPLKFFAYAWGEASDLPAETQFGVVEAFARWGFTTNPLMVVAKDAAGLIAHYRSIEAQRALLGYDIDGVVYKVNSLELQRRLGFVSRSPRWAIAHKFPAEQATTVLEDIEIQVGRTGALTPVAKLTPVTVGGVVVSSATLHNEDEIARKDVRIGDTVVVQRAGDVIPQVVRVIEEKRPAGSKPYEFPTHCPACGSHAVREVDTKSGKVDAVRRCTGGLICPAQMVERLRHFVSRNAFDIEGLGEKQVRAFYEWGLIASPADIFTLETRNARSLQRLENRDGWGKTSAANLFAAIAERRTVAVDRFVFALGIRHVGETNAKRLMRHYGTVEALEAGALAAVIPGEEHPKGNEAWQEMIGIDGIGDVVAEAVIEFFGEPRNREVVTALLKEVTPEPMEQVAAASPVSGKTVVFTGSLEKMTRDEAKAMAERLGAKVAGSVSAKTNLVVAGPGAGSKLEKAQALGVQVITEDEWFELVG.

NAD(+) contacts are provided by residues aspartate 57–aspartate 61, serine 106–leucine 107, and glutamate 140. Lysine 142 acts as the N6-AMP-lysine intermediate in catalysis. NAD(+)-binding residues include arginine 163, glutamate 200, lysine 316, and lysine 340. Zn(2+) is bound by residues cysteine 434, cysteine 437, cysteine 458, and cysteine 464. A BRCT domain is found at alanine 643–glycine 720.

Belongs to the NAD-dependent DNA ligase family. LigA subfamily. It depends on Mg(2+) as a cofactor. Mn(2+) is required as a cofactor.

It catalyses the reaction NAD(+) + (deoxyribonucleotide)n-3'-hydroxyl + 5'-phospho-(deoxyribonucleotide)m = (deoxyribonucleotide)n+m + AMP + beta-nicotinamide D-nucleotide.. DNA ligase that catalyzes the formation of phosphodiester linkages between 5'-phosphoryl and 3'-hydroxyl groups in double-stranded DNA using NAD as a coenzyme and as the energy source for the reaction. It is essential for DNA replication and repair of damaged DNA. The protein is DNA ligase of Xanthobacter autotrophicus (strain ATCC BAA-1158 / Py2).